The following is a 297-amino-acid chain: Phospholipid scramblase 2 (297 aa).

The interval 1–72 is proline-rich domain (PRD); sequence MRSWNSLFCL…NQPGRPEGVP (72 aa). Residues 1-276 are Cytoplasmic-facing; it reads MRSWNSLFCL…IQFPRDLDVK (276 aa). Threonine 149 is modified (phosphothreonine; by PKC). S-palmitoyl cysteine attachment occurs at residues cysteine 172, cysteine 173, cysteine 174, cysteine 176, and cysteine 177. A helical membrane pass occupies residues 277 to 293; that stretch reads MKAVMIGACFLIDYMFF. Over 294–297 the chain is Extracellular; the sequence is ERTR.

This sequence belongs to the phospholipid scramblase family. Ca(2+) is required as a cofactor. In terms of tissue distribution, expression of isoform 1 seems restricted to testis.

It localises to the membrane. The protein resides in the nucleus. The enzyme catalyses a 1,2-diacyl-sn-glycero-3-phosphocholine(in) = a 1,2-diacyl-sn-glycero-3-phosphocholine(out). Its function is as follows. May catalyze calcium-induced ATP-independent rapid bidirectional and non-specific movement of phospholipids (lipid scrambling or lipid flip-flop) between the inner and outer leaflet of the plasma membrane. In terms of biological role, has no phospholipid scramblase activity, due to the lack of a N-terminal proline-rich domain. The polypeptide is Phospholipid scramblase 2 (Homo sapiens (Human)).